The primary structure comprises 505 residues: Glutamyl-tRNA(Gln) amidotransferase subunit A (505 aa).

Residues Lys-80 and Ser-155 each act as charge relay system in the active site. Ser-179 acts as the Acyl-ester intermediate in catalysis.

This sequence belongs to the amidase family. GatA subfamily. In terms of assembly, heterotrimer of A, B and C subunits.

The catalysed reaction is L-glutamyl-tRNA(Gln) + L-glutamine + ATP + H2O = L-glutaminyl-tRNA(Gln) + L-glutamate + ADP + phosphate + H(+). Its function is as follows. Allows the formation of correctly charged Gln-tRNA(Gln) through the transamidation of misacylated Glu-tRNA(Gln) in organisms which lack glutaminyl-tRNA synthetase. The reaction takes place in the presence of glutamine and ATP through an activated gamma-phospho-Glu-tRNA(Gln). The polypeptide is Glutamyl-tRNA(Gln) amidotransferase subunit A (Acidothermus cellulolyticus (strain ATCC 43068 / DSM 8971 / 11B)).